The primary structure comprises 67 residues: UPF0434 protein RALTA_A0561 (67 aa).

It belongs to the UPF0434 family.

This Cupriavidus taiwanensis (strain DSM 17343 / BCRC 17206 / CCUG 44338 / CIP 107171 / LMG 19424 / R1) (Ralstonia taiwanensis (strain LMG 19424)) protein is UPF0434 protein RALTA_A0561.